The chain runs to 24 residues: Waglerin-3 (24 aa).

A compositionally biased stretch (basic and acidic residues) spans 1–10 (SLGGKPDLRP). Residues 1–24 (SLGGKPDLRPCHPPCHYIPRPKPR) form a disordered region. Cys-11 and Cys-15 are joined by a disulfide.

Belongs to the waglerin family. Waglerin-1 is monomeric. Amidation of the waglerin-1 C-terminus increases the affinity by 2-fold. In terms of tissue distribution, expressed by the venom gland.

The protein localises to the secreted. Waglerin-1 selectively blocks the epsilon subunit of muscle nicotinic acetylcholine receptor (nAChR). Also has effects on rodent ionotropic GABA(A) receptors (GABR), since it potentiates I(GABA) in some neurons and depresses I(GABA) in others. In mice, it elicits tachypnea, ocular proptosis, rapid collapse and spasms, whereas no toxic effects on respiration and blood pressure are observed in rats. Its function is as follows. Waglerin-3 selectively blocks the epsilon subunit of muscle nicotinic acetylcholine receptor (nAChR). It elicits tachypnea, ocular proptosis, rapid collapse and spasms in mice. It causes death by respiratory failure. This chain is Waglerin-3, found in Tropidolaemus wagleri (Wagler's pit viper).